The primary structure comprises 126 residues: Protein ApaG (126 aa).

Residues 2–126 (DVSLPCIKIQ…FRLAVPHVLN (125 aa)) form the ApaG domain.

The protein is Protein ApaG of Vibrio cholerae serotype O1 (strain ATCC 39541 / Classical Ogawa 395 / O395).